We begin with the raw amino-acid sequence, 932 residues long: MADYRKTLNLPDTAFPMRGDLPKREPGWIAAWQQQKLYQKIRKAAAGRPKFVLHDGPPYANGNLHLGHALNKILKDIIVRSKTLAGFDAPYVPGWDCHGLPIEHKVEVTHGKNLPADKVRELCRAYAAEQVEIQKKEFIRLGVLGDWDNPYLTMNFANEAGEVRALAEMVKAGYVFKGLKPVNWCFDCGSALAEAEVEYADKVSPAVDVGFPCAEPDRLADAFGLAPLTKPALAVIWTTTPWTIPANQALNMHPEFDYALVDTGERYLVLAHDLVGACLERYGLNGRIVATCKGAALDRVAFRHPFYDRLSPVFLGDYVTLDAGTGVVHSAPAYGLEDFQSCRANGMQSDDILTPVMGDGRYAPDLPFFGGMNIWKANPEITAKLREVGCLLAEAKITHSYMHCWRHKTPLIYRATAQWFVGMDKPVADGSTLRERALRGVEATRFFPAWGQSRLHAMIANRPDWCISRQRNWGVPIPFFLHKETGELHPRTVELMEEVAKRIEQEGIEAWFKLDAAELLGAEAAQYEKISDTLDVWFDSGTTHWHVLRGSHNDGHVEGPRADLYLEGSDQHRGWFHSSLLTGCAIDGHPPYNALLTHGFTVDQQGRKMSKSLGNTILPQEVSEKMGAEILRLWVASTDYSGELSISKEILDRVVEVYRRVRNTLRFLLANTADFDIAKDAVPLEQWLDIDRYALAFTRQLAQQAEADYARFEFHRIVQALQVFCAEDLGAFYLDILKDRLYTTAAGSQARRAAQTALWHITQTLLKLMAPILSFTAEEAWAVLNPGKEDSVMLHTFHALPAQEGEAGLVARWETIRAVRAEALKVIEALRTEGKVGASLQAELELRLTADKYTAMQSLGEDLRFVTMTSRATLLEAASAEAEAIVATPSARTKCERCWHYTDDVGHNAEHPTLCARCADNLYGAGETRTHA.

The 'HIGH' region motif lies at 58–68 (PYANGNLHLGH). Position 567 (Glu567) interacts with L-isoleucyl-5'-AMP. A 'KMSKS' region motif is present at residues 608 to 612 (KMSKS). Lys611 contacts ATP. Positions 895, 898, 915, and 918 each coordinate Zn(2+).

Belongs to the class-I aminoacyl-tRNA synthetase family. IleS type 1 subfamily. As to quaternary structure, monomer. The cofactor is Zn(2+).

It localises to the cytoplasm. The catalysed reaction is tRNA(Ile) + L-isoleucine + ATP = L-isoleucyl-tRNA(Ile) + AMP + diphosphate. Catalyzes the attachment of isoleucine to tRNA(Ile). As IleRS can inadvertently accommodate and process structurally similar amino acids such as valine, to avoid such errors it has two additional distinct tRNA(Ile)-dependent editing activities. One activity is designated as 'pretransfer' editing and involves the hydrolysis of activated Val-AMP. The other activity is designated 'posttransfer' editing and involves deacylation of mischarged Val-tRNA(Ile). This chain is Isoleucine--tRNA ligase, found in Azoarcus sp. (strain BH72).